Consider the following 92-residue polypeptide: Small ribosomal subunit protein uS19c (92 aa).

It belongs to the universal ribosomal protein uS19 family.

It localises to the plastid. The protein localises to the chloroplast. In terms of biological role, protein S19 forms a complex with S13 that binds strongly to the 16S ribosomal RNA. The sequence is that of Small ribosomal subunit protein uS19c from Spirogyra maxima (Green alga).